A 162-amino-acid polypeptide reads, in one-letter code: Protein-export protein SecB (162 aa).

It belongs to the SecB family. Homotetramer, a dimer of dimers. One homotetramer interacts with 1 SecA dimer.

It localises to the cytoplasm. Its function is as follows. One of the proteins required for the normal export of preproteins out of the cell cytoplasm. It is a molecular chaperone that binds to a subset of precursor proteins, maintaining them in a translocation-competent state. It also specifically binds to its receptor SecA. The sequence is that of Protein-export protein SecB from Hamiltonella defensa subsp. Acyrthosiphon pisum (strain 5AT).